The primary structure comprises 289 residues: Shikimate dehydrogenase (NADP(+)) (289 aa).

Shikimate contacts are provided by residues 22–24 (SRS) and threonine 69. Residue lysine 73 is the Proton acceptor of the active site. Glutamate 85 is a binding site for NADP(+). Shikimate is bound by residues asparagine 94 and aspartate 109. NADP(+)-binding positions include 134 to 138 (GAGGA), 158 to 163 (NRTLSR), and isoleucine 226. Tyrosine 228 provides a ligand contact to shikimate. Glycine 249 contributes to the NADP(+) binding site.

The protein belongs to the shikimate dehydrogenase family. Homodimer.

It catalyses the reaction shikimate + NADP(+) = 3-dehydroshikimate + NADPH + H(+). The protein operates within metabolic intermediate biosynthesis; chorismate biosynthesis; chorismate from D-erythrose 4-phosphate and phosphoenolpyruvate: step 4/7. Functionally, involved in the biosynthesis of the chorismate, which leads to the biosynthesis of aromatic amino acids. Catalyzes the reversible NADPH linked reduction of 3-dehydroshikimate (DHSA) to yield shikimate (SA). The polypeptide is Shikimate dehydrogenase (NADP(+)) (Brucella ovis (strain ATCC 25840 / 63/290 / NCTC 10512)).